Reading from the N-terminus, the 104-residue chain is uncharacterized protein (104 aa).

This is an uncharacterized protein from Mycobacterium tuberculosis (strain CDC 1551 / Oshkosh).